Here is a 618-residue protein sequence, read N- to C-terminus: Glutamine--fructose-6-phosphate aminotransferase [isomerizing] (618 aa).

Cysteine 2 functions as the Nucleophile; for GATase activity in the catalytic mechanism. Positions 2–226 constitute a Glutamine amidotransferase type-2 domain; sequence CGIVGYAGRN…DFETAVLSPT (225 aa). Residues 69-94 form a disordered region; that stretch reads HTRWATHGRPSTKNAHPHNSGGNPGK. SIS domains follow at residues 295–434 and 467–608; these read SEDE…VRDR and CAEG…IDKP. Lysine 613 functions as the For Fru-6P isomerization activity in the catalytic mechanism.

In terms of assembly, homodimer.

The protein localises to the cytoplasm. The enzyme catalyses D-fructose 6-phosphate + L-glutamine = D-glucosamine 6-phosphate + L-glutamate. Catalyzes the first step in hexosamine metabolism, converting fructose-6P into glucosamine-6P using glutamine as a nitrogen source. The protein is Glutamine--fructose-6-phosphate aminotransferase [isomerizing] of Methanosarcina acetivorans (strain ATCC 35395 / DSM 2834 / JCM 12185 / C2A).